Reading from the N-terminus, the 435-residue chain is Protein lin-54 (435 aa).

The segment at 73–136 is disordered; that stretch reads DEPIDTSSHR…PASLPRTVQP (64 aa). Positions 102–120 are enriched in polar residues; the sequence is TPGSSQYTVRNLSNLSGSP. Residues 173–288 form the CRC domain; it reads QRKPCNCTKS…KCKGCQNTET (116 aa). Residues 175 to 188 form a DNA-binding region; sequence KPCNCTKSQCLKLY. The Zn(2+) site is built by Cys-177, Cys-179, Cys-184, Cys-189, Cys-191, Cys-198, Cys-201, Cys-203, and Cys-206. The tract at residues 235–250 is linker; the sequence is IGIARGGITDIERLHQ. Positions 253, 255, 260, 265, 267, 274, 278, 280, and 283 each coordinate Zn(2+). The segment at 253–266 is DNA-binding; the sequence is CHCKKSGCLKNYCE. A disordered region spans residues 415–435; it reads LTQDLDAAPTDDIPGPSTSTS.

It belongs to the lin-54 family. As to quaternary structure, component of the DRM complex, at least composed of lin-9, lin-35, lin-37, lin-52, lin-53, lin-54- dpl-1 and efl-1.

It is found in the nucleus. Its subcellular location is the chromosome. In terms of biological role, synthetic multivulva class B (synMuvB) protein. SynMuvB proteins are required to repress the induction of vulval development by Ras signaling and probably act by forming the multiprotein DRM complex that repress transcription. In Caenorhabditis elegans, this protein is Protein lin-54.